Here is a 148-residue protein sequence, read N- to C-terminus: Large ribosomal subunit protein bL9 (148 aa).

The protein belongs to the bacterial ribosomal protein bL9 family.

Functionally, binds to the 23S rRNA. The sequence is that of Large ribosomal subunit protein bL9 from Pseudomonas savastanoi pv. phaseolicola (strain 1448A / Race 6) (Pseudomonas syringae pv. phaseolicola (strain 1448A / Race 6)).